The sequence spans 106 residues: Ferredoxin-2 (106 aa).

4Fe-4S ferredoxin-type domains follow at residues 2–29 (YVVT…YEGE) and 30–59 (NFLV…GKWL). Residues cysteine 8 and cysteine 16 each coordinate [3Fe-4S] cluster. Positions 20, 39, 42, and 45 each coordinate [4Fe-4S] cluster. Cysteine 49 provides a ligand contact to [3Fe-4S] cluster. The disordered stretch occupies residues 80 to 106 (ADADDWKDKPDKTGLLSENPGKGTVCH).

The cofactor is [4Fe-4S] cluster. [3Fe-4S] cluster serves as cofactor.

Its function is as follows. Ferredoxins are iron-sulfur proteins that transfer electrons in a wide variety of metabolic reactions. The protein is Ferredoxin-2 of Rhodospirillum rubrum.